Reading from the N-terminus, the 315-residue chain is 1-aminocyclopropane-1-carboxylate oxidase 1 (315 aa).

One can recognise a Fe2OG dioxygenase domain in the interval 153–253 (PNFGTKVSNY…RMSLASFYNP (101 aa)). Fe cation contacts are provided by H177, D179, and H234.

The protein belongs to the iron/ascorbate-dependent oxidoreductase family. The cofactor is Fe cation. In terms of tissue distribution, predominantly expressed in the petals and the stigma and style.

It catalyses the reaction 1-aminocyclopropane-1-carboxylate + L-ascorbate + O2 = ethene + L-dehydroascorbate + hydrogen cyanide + CO2 + 2 H2O. The protein operates within alkene biosynthesis; ethylene biosynthesis via S-adenosyl-L-methionine; ethylene from S-adenosyl-L-methionine: step 2/2. This Solanum lycopersicum (Tomato) protein is 1-aminocyclopropane-1-carboxylate oxidase 1 (ACO1).